The following is a 692-amino-acid chain: DNA topoisomerase 4 subunit B (692 aa).

ATP contacts are provided by residues Y53, N93, D120, 162 to 168 (GLHGVGI), and K393. One can recognise a Toprim domain in the interval 473–587 (AELFIVEGDS…AGHLYLAVPP (115 aa)). Residues E479, D552, and D554 each contribute to the Mg(2+) site.

It belongs to the type II topoisomerase family. ParE type 1 subfamily. In terms of assembly, heterotetramer composed of ParC and ParE. Mg(2+) serves as cofactor. Requires Mn(2+) as cofactor. The cofactor is Ca(2+).

It carries out the reaction ATP-dependent breakage, passage and rejoining of double-stranded DNA.. In terms of biological role, topoisomerase IV is essential for chromosome segregation. It relaxes supercoiled DNA. Performs the decatenation events required during the replication of a circular DNA molecule. The sequence is that of DNA topoisomerase 4 subunit B from Bartonella bacilliformis (strain ATCC 35685 / KC583 / Herrer 020/F12,63).